We begin with the raw amino-acid sequence, 160 residues long: Large ribosomal subunit protein uL16 (160 aa).

The disordered stretch occupies residues 138–160; that stretch reads KNLEAPSQEKTKNSKKSQEEVKQ.

The protein belongs to the universal ribosomal protein uL16 family. Part of the 50S ribosomal subunit.

In terms of biological role, binds 23S rRNA and is also seen to make contacts with the A and possibly P site tRNAs. The sequence is that of Large ribosomal subunit protein uL16 from Prochlorococcus marinus (strain MIT 9215).